The primary structure comprises 444 residues: Mitogen-activated protein kinase mpk-1 (444 aa).

Polar residues-rich tracts occupy residues 1–17 (MPTW…TTRN) and 24–56 (GHPQ…HVRQ). Residues 1 to 56 (MPTWIPNNLCAQPTTRNAKPPSNGHPQATQQQSAPGSLAYRNSSNIPNGATNHVRQ) are disordered. The Protein kinase domain occupies 96–384 (YVNLSYIGEG…IEQALAHPYL (289 aa)). Residues 102–110 (IGEGAYGMV) and Lys125 each bind ATP. The active-site Proton acceptor is Asp220. The residue at position 256 (Thr256) is a Phosphothreonine. The TXY motif lies at 256–258 (TEY). Tyr258 bears the Phosphotyrosine mark.

This sequence belongs to the protein kinase superfamily. CMGC Ser/Thr protein kinase family. MAP kinase subfamily. Isoform a interacts with gck-1 (via N-terminus). It depends on Mg(2+) as a cofactor. In terms of processing, isoform a is phosphorylated at the pachytene stage during oogenesis and is negatively regulated by gck-1. Isoform b is phosphorylated in proximal oocytes. In terms of tissue distribution, expressed in cells lining the rectum. Isoform a is expressed in nervous system, body wall muscles and posterior intestine. Isoform b expression may be restricted to germline.

The catalysed reaction is L-seryl-[protein] + ATP = O-phospho-L-seryl-[protein] + ADP + H(+). It carries out the reaction L-threonyl-[protein] + ATP = O-phospho-L-threonyl-[protein] + ADP + H(+). Activated by dual phosphorylation at Thr-256 and Tyr-258. May be inactivated by lip-1-mediated dephosphorylation. Functionally, functions in let-60 Ras signaling pathway; acts downstream of lin-45 raf kinase, but before the lin-1 gene product in controlling vulval cell differentiation. Plays a negative role in proximal germline proliferation in the mitotic zone. Required for progression of developing oocytes through the pachytene stage, perhaps acting after efl-1/dpl-1-mediated gene activation and before gld-1 down-regulation. May play a role in global X chromosome reactivation or be indirectly required for progression of germ cells through meiosis to the point where X reactivation occurs. In oocytes, inhibits the activity of the chloride channel clh-3, likely by activating gck-3. Plays a role in response to M.nematophilum-mediated bacterial infection by promoting tail swelling and preventing constipation. Involved in fluid homeostasis. In addition, involved in the up-regulation of lysozyme ilys-3 expression in the intestine in responses to M.nematophilum-mediated bacterial infection. By phosphorylating transcription factor skn-1 (isoform c) may play a role in increasing life span downstream of lin-45, let-60 and mek-2. By up-regulating cep-1 and down-regulating gld-1 expression in the late pachytene stage, plays a role in germline apoptosis in response to DNA damage. Regulates egl-1 expression in response to DNA damage, probably upstream of cep-1. In terms of biological role, suppresses germline tumor formation by preventing the dedifferentiation of secondary spermatocytes probably upstream of rskn-1. The protein is Mitogen-activated protein kinase mpk-1 (mpk-1) of Caenorhabditis elegans.